The sequence spans 376 residues: Glucose-1-phosphate adenylyltransferase (376 aa).

Residues Y101, G166, 181-182, and S192 contribute to the alpha-D-glucose 1-phosphate site; that span reads EK.

This sequence belongs to the bacterial/plant glucose-1-phosphate adenylyltransferase family. In terms of assembly, homotetramer.

It catalyses the reaction alpha-D-glucose 1-phosphate + ATP + H(+) = ADP-alpha-D-glucose + diphosphate. It participates in glycan biosynthesis; glycogen biosynthesis. Involved in the biosynthesis of ADP-glucose, a building block required for the elongation reactions to produce glycogen. Catalyzes the reaction between ATP and alpha-D-glucose 1-phosphate (G1P) to produce pyrophosphate and ADP-Glc. The chain is Glucose-1-phosphate adenylyltransferase from Bacillus cereus (strain ZK / E33L).